The sequence spans 387 residues: Putative actin-29 (387 aa).

This sequence belongs to the actin family.

It is found in the cytoplasm. The protein localises to the cytoskeleton. It catalyses the reaction ATP + H2O = ADP + phosphate + H(+). Its function is as follows. Actins are highly conserved proteins that are involved in various types of cell motility and are ubiquitously expressed in all eukaryotic cells. Multiple isoforms are involved in various cellular functions such as cytoskeleton structure, cell mobility, chromosome movement and muscle contraction. The chain is Putative actin-29 (act29) from Dictyostelium discoideum (Social amoeba).